Consider the following 355-residue polypeptide: S-methyl-5'-thioadenosine phosphorylase (355 aa).

Phosphate contacts are provided by residues Thr-45, 91–92 (RH), and 124–125 (SA). Met-226 contacts substrate. Ser-227 contributes to the phosphate binding site. A substrate-binding site is contributed by 250–252 (DYD).

It belongs to the PNP/MTAP phosphorylase family. MTAP subfamily. As to quaternary structure, homotrimer.

The protein resides in the cytoplasm. It localises to the nucleus. The catalysed reaction is S-methyl-5'-thioadenosine + phosphate = 5-(methylsulfanyl)-alpha-D-ribose 1-phosphate + adenine. The protein operates within amino-acid biosynthesis; L-methionine biosynthesis via salvage pathway; S-methyl-5-thio-alpha-D-ribose 1-phosphate from S-methyl-5'-thioadenosine (phosphorylase route): step 1/1. In terms of biological role, catalyzes the reversible phosphorylation of S-methyl-5'-thioadenosine (MTA) to adenine and 5-methylthioribose-1-phosphate. Involved in the breakdown of MTA, a major by-product of polyamine biosynthesis. Responsible for the first step in the methionine salvage pathway after MTA has been generated from S-adenosylmethionine. Has broad substrate specificity with 6-aminopurine nucleosides as preferred substrates. The chain is S-methyl-5'-thioadenosine phosphorylase from Emericella nidulans (strain FGSC A4 / ATCC 38163 / CBS 112.46 / NRRL 194 / M139) (Aspergillus nidulans).